The chain runs to 221 residues: Thiopurine S-methyltransferase (221 aa).

S-adenosyl-L-methionine is bound by residues tryptophan 12, leucine 47, glutamate 68, and arginine 125.

Belongs to the class I-like SAM-binding methyltransferase superfamily. TPMT family.

It is found in the cytoplasm. The enzyme catalyses S-adenosyl-L-methionine + a thiopurine = S-adenosyl-L-homocysteine + a thiopurine S-methylether.. The sequence is that of Thiopurine S-methyltransferase from Legionella pneumophila (strain Paris).